The chain runs to 206 residues: Ribosomal RNA large subunit methyltransferase E (206 aa).

5 residues coordinate S-adenosyl-L-methionine: G63, W65, D83, D99, and D124. K164 functions as the Proton acceptor in the catalytic mechanism.

This sequence belongs to the class I-like SAM-binding methyltransferase superfamily. RNA methyltransferase RlmE family.

Its subcellular location is the cytoplasm. It catalyses the reaction uridine(2552) in 23S rRNA + S-adenosyl-L-methionine = 2'-O-methyluridine(2552) in 23S rRNA + S-adenosyl-L-homocysteine + H(+). Functionally, specifically methylates the uridine in position 2552 of 23S rRNA at the 2'-O position of the ribose in the fully assembled 50S ribosomal subunit. This chain is Ribosomal RNA large subunit methyltransferase E, found in Buchnera aphidicola subsp. Schizaphis graminum (strain Sg).